Reading from the N-terminus, the 342-residue chain is N-acetyl-gamma-glutamyl-phosphate reductase (342 aa).

Residue C149 is part of the active site.

This sequence belongs to the NAGSA dehydrogenase family. Type 1 subfamily.

Its subcellular location is the cytoplasm. The catalysed reaction is N-acetyl-L-glutamate 5-semialdehyde + phosphate + NADP(+) = N-acetyl-L-glutamyl 5-phosphate + NADPH + H(+). It participates in amino-acid biosynthesis; L-arginine biosynthesis; N(2)-acetyl-L-ornithine from L-glutamate: step 3/4. Catalyzes the NADPH-dependent reduction of N-acetyl-5-glutamyl phosphate to yield N-acetyl-L-glutamate 5-semialdehyde. This is N-acetyl-gamma-glutamyl-phosphate reductase from Nitrosomonas europaea (strain ATCC 19718 / CIP 103999 / KCTC 2705 / NBRC 14298).